Consider the following 644-residue polypeptide: ATP-dependent zinc metalloprotease FtsH (644 aa).

Residues 1–4 (MAKN) are Cytoplasmic-facing. Residues 5–25 (LILWLVIAVVLMSVFQSFGPS) traverse the membrane as a helical segment. Residues 26–98 (ESNGRKVDYS…VGEPPEEPSL (73 aa)) lie on the Periplasmic side of the membrane. Residues 99–119 (LASIFISWFPMLLLIGVWIFF) traverse the membrane as a helical segment. The Cytoplasmic segment spans residues 120–644 (MRQMQGGGGK…NTMSEQLGDK (525 aa)). 192–199 (GPPGTGKT) is a binding site for ATP. A Zn(2+)-binding site is contributed by His-414. Glu-415 is an active-site residue. The Zn(2+) site is built by His-418 and Asp-492. The tract at residues 598–644 (VRPPAGWEEPGASNNSGDNGSPKAPRPVDEPRTPNPGNTMSEQLGDK) is disordered. Positions 632-644 (NPGNTMSEQLGDK) are enriched in polar residues.

It in the central section; belongs to the AAA ATPase family. This sequence in the C-terminal section; belongs to the peptidase M41 family. As to quaternary structure, homohexamer. Requires Zn(2+) as cofactor.

Its subcellular location is the cell inner membrane. Its function is as follows. Acts as a processive, ATP-dependent zinc metallopeptidase for both cytoplasmic and membrane proteins. Plays a role in the quality control of integral membrane proteins. The polypeptide is ATP-dependent zinc metalloprotease FtsH (Shigella flexneri).